Here is a 121-residue protein sequence, read N- to C-terminus: MEAEVDKLELMFQKAESDLDYIQYRLEYEIKTNHPDSASEKNPVTLLKELSVIKSRYQTLYARFKPVAVEQKESKSRICATVKKTMNMIQKLQKQTDLELSPLTKEEKTAAEQFKFHMPDL.

Phosphoserine is present on serine 101.

It belongs to the SKA2 family. As to quaternary structure, component of the SKA1 complex, composed of SKA1, SKA2 and SKA3. Forms a heterodimer with SKA1; the heterodimer interacting with SKA3. The core SKA1 complex is composed of 2 SKA1-SKA2 heterodimers, each heterodimer interacting with a molecule of the SKA3 homodimer. The core SKA1 complex associates with microtubules and forms oligomeric assemblies. Interacts directly with SKA1. Binds directly to microtubules; but with a much lower affinity than SKA1. May interact with NR3C1; the relevance of such interaction remains unclear in vivo.

It localises to the cytoplasm. It is found in the cytoskeleton. The protein resides in the spindle. The protein localises to the chromosome. Its subcellular location is the centromere. It localises to the kinetochore. Its function is as follows. Component of the SKA1 complex, a microtubule-binding subcomplex of the outer kinetochore that is essential for proper chromosome segregation. Required for timely anaphase onset during mitosis, when chromosomes undergo bipolar attachment on spindle microtubules leading to silencing of the spindle checkpoint. The SKA1 complex is a direct component of the kinetochore-microtubule interface and directly associates with microtubules as oligomeric assemblies. The complex facilitates the processive movement of microspheres along a microtubule in a depolymerization-coupled manner. In the complex, it is required for SKA1 localization. Affinity for microtubules is synergistically enhanced in the presence of the ndc-80 complex and may allow the ndc-80 complex to track depolymerizing microtubules. The polypeptide is Spindle and kinetochore-associated protein 2 (SKA2) (Homo sapiens (Human)).